Here is a 158-residue protein sequence, read N- to C-terminus: Ribonuclease H (158 aa).

The RNase H type-1 domain maps to 3-144; it reads ELKLIHIFTD…CDQLARAAAE (142 aa). The Mg(2+) site is built by aspartate 12, glutamate 50, aspartate 72, and aspartate 136. The disordered stretch occupies residues 137–158; sequence QLARAAAEASPTQVDEGYQPES.

It belongs to the RNase H family. As to quaternary structure, monomer. The cofactor is Mg(2+).

Its subcellular location is the cytoplasm. The catalysed reaction is Endonucleolytic cleavage to 5'-phosphomonoester.. Endonuclease that specifically degrades the RNA of RNA-DNA hybrids. In Shewanella sp. (strain ANA-3), this protein is Ribonuclease H.